Reading from the N-terminus, the 596-residue chain is Putative terpenoid synthase 5 (596 aa).

Mg(2+) is bound by residues Asp349, Asp353, Asn481, and Asp489. The DDXXD motif signature appears at 349-353; it reads DDTCD.

It belongs to the terpene synthase family. Tpsa subfamily. Requires Mg(2+) as cofactor. It depends on Mn(2+) as a cofactor.

The protein localises to the cytoplasm. The protein operates within secondary metabolite biosynthesis; terpenoid biosynthesis. This chain is Putative terpenoid synthase 5 (TPS05), found in Arabidopsis thaliana (Mouse-ear cress).